The chain runs to 207 residues: Dephospho-CoA kinase (207 aa).

The DPCK domain maps to 11-207 (RIGLTGGIAS…LLKMSPTAEL (197 aa)). 19-24 (ASGKSS) is a binding site for ATP.

Belongs to the CoaE family.

Its subcellular location is the cytoplasm. It catalyses the reaction 3'-dephospho-CoA + ATP = ADP + CoA + H(+). It functions in the pathway cofactor biosynthesis; coenzyme A biosynthesis; CoA from (R)-pantothenate: step 5/5. Catalyzes the phosphorylation of the 3'-hydroxyl group of dephosphocoenzyme A to form coenzyme A. The chain is Dephospho-CoA kinase from Synechococcus sp. (strain CC9605).